Here is a 481-residue protein sequence, read N- to C-terminus: Cysteine--tRNA ligase (481 aa).

Residue cysteine 29 participates in Zn(2+) binding. A 'HIGH' region motif is present at residues 31–41; it reads PTVYDYSHLGH. 3 residues coordinate Zn(2+): cysteine 210, histidine 235, and glutamate 239. The 'KMSKS' region motif lies at 272 to 276; it reads KMSKS. Residue lysine 275 coordinates ATP.

It belongs to the class-I aminoacyl-tRNA synthetase family. As to quaternary structure, monomer. Zn(2+) serves as cofactor.

It is found in the cytoplasm. The enzyme catalyses tRNA(Cys) + L-cysteine + ATP = L-cysteinyl-tRNA(Cys) + AMP + diphosphate. The chain is Cysteine--tRNA ligase from Anaeromyxobacter dehalogenans (strain 2CP-C).